Consider the following 669-residue polypeptide: Very long-chain fatty acid transport protein (669 aa).

At M1–Q5 the chain is on the cytoplasmic side. The chain crosses the membrane as a helical span at residues V6 to I26. The Extracellular portion of the chain corresponds to T27–P148. The chain crosses the membrane as a helical span at residues L149 to Y169. At N170–S270 the chain is on the cytoplasmic side. Y256–A267 serves as a coordination point for ATP. An intramembrane segment occupies W271 to A339. Topologically, residues T340–L669 are cytoplasmic. An FACS motif is present at residues D501–Q551. The C-terminal peroxisome targeting signal (PTS1) signature appears at I667–L669.

Belongs to the ATP-dependent AMP-binding enzyme family. As to quaternary structure, interacts with fatty acyl-CoA synthetases FAA1 and FAA4.

The protein localises to the lipid droplet. The protein resides in the cell membrane. It is found in the peroxisome membrane. It localises to the peroxisome. The enzyme catalyses a very long-chain fatty acid + ATP + CoA = a very long-chain fatty acyl-CoA + AMP + diphosphate. The catalysed reaction is tetracosanoate + ATP + CoA = tetracosanoyl-CoA + AMP + diphosphate. Its function is as follows. Acyl-CoA synthetase required for both the import of long chain fatty acids (LCFAs) (C14-C18) and the activation very long chain fatty acids (VLCFAs) (C20-C26) by esterification of the fatty acids into metabolically active CoA-thioesters for subsequent degradation or incorporation into phospholipids. The transport and fatty acyl-CoA synthetase activities are genetically separable and are thus independent activities. Esterifies VLCFAs in the peroxisome matrix. The VLCFAs are actively transported into peroxisomes by a PXA1-PXA2 heterodimeric transporter in the peroxisomal membrane. In Saccharomyces cerevisiae (strain ATCC 204508 / S288c) (Baker's yeast), this protein is Very long-chain fatty acid transport protein (FAT1).